The following is a 183-amino-acid chain: Gamma-crystallin N (183 aa).

4 consecutive Beta/gamma crystallin 'Greek key' domains span residues 6–46, 47–89, 95–136, and 138–180; these read GKIT…RVES, GAWV…RPVG, FRID…KVYG, and GAWV…RRVL.

This sequence belongs to the beta/gamma-crystallin family. As to quaternary structure, monomer. Detected in the auditory hindbrain where it is highly expressed in the medial nucleus of the trapezoid body, but also present in other nuclei of the superior olivary complex.

Its function is as follows. Crystallins are the dominant structural components of the vertebrate eye lens. Also plays an important role for integrity and function of auditory nuclei. This Rattus norvegicus (Rat) protein is Gamma-crystallin N.